Here is a 389-residue protein sequence, read N- to C-terminus: 26S proteasome regulatory subunit 10B (389 aa).

The residue at position 72 (K72) is an N6-acetyllysine. 174–181 (GPPGTGKT) provides a ligand contact to ATP. K206 is modified (N6-acetyllysine). Phosphoserine is present on S244.

Belongs to the AAA ATPase family. As to quaternary structure, component of the 19S proteasome regulatory particle complex. The 26S proteasome consists of a 20S core particle (CP) and two 19S regulatory subunits (RP). The regulatory particle is made of a lid composed of 9 subunits, a base containing 6 ATPases including PSMC6 and few additional components. Interacts with PAAF1.

It localises to the cytoplasm. It is found in the nucleus. Functionally, component of the 26S proteasome, a multiprotein complex involved in the ATP-dependent degradation of ubiquitinated proteins. This complex plays a key role in the maintenance of protein homeostasis by removing misfolded or damaged proteins, which could impair cellular functions, and by removing proteins whose functions are no longer required. Therefore, the proteasome participates in numerous cellular processes, including cell cycle progression, apoptosis, or DNA damage repair. PSMC6 belongs to the heterohexameric ring of AAA (ATPases associated with diverse cellular activities) proteins that unfolds ubiquitinated target proteins that are concurrently translocated into a proteolytic chamber and degraded into peptides. This chain is 26S proteasome regulatory subunit 10B (PSMC6), found in Bos taurus (Bovine).